A 296-amino-acid chain; its full sequence is Nitrogenase iron protein (296 aa).

11 to 18 (GKGGIGKS) contributes to the ATP binding site. Residue cysteine 99 coordinates [4Fe-4S] cluster. Arginine 102 bears the ADP-ribosylarginine; by dinitrogenase reductase ADP-ribosyltransferase mark. Cysteine 134 contributes to the [4Fe-4S] cluster binding site.

The protein belongs to the NifH/BchL/ChlL family. Homodimer. [4Fe-4S] cluster serves as cofactor. In terms of processing, the reversible ADP-ribosylation of Arg-102 inactivates the nitrogenase reductase and regulates nitrogenase activity.

It carries out the reaction N2 + 8 reduced [2Fe-2S]-[ferredoxin] + 16 ATP + 16 H2O = H2 + 8 oxidized [2Fe-2S]-[ferredoxin] + 2 NH4(+) + 16 ADP + 16 phosphate + 6 H(+). The key enzymatic reactions in nitrogen fixation are catalyzed by the nitrogenase complex, which has 2 components: the iron protein and the molybdenum-iron protein. This Dechloromonas aromatica (strain RCB) protein is Nitrogenase iron protein.